A 306-amino-acid polypeptide reads, in one-letter code: Ribonuclease Z (306 aa).

Residues His-63, His-65, Asp-67, His-68, His-141, Asp-211, and His-269 each contribute to the Zn(2+) site. The Proton acceptor role is filled by Asp-67.

This sequence belongs to the RNase Z family. In terms of assembly, homodimer. Zn(2+) is required as a cofactor.

It carries out the reaction Endonucleolytic cleavage of RNA, removing extra 3' nucleotides from tRNA precursor, generating 3' termini of tRNAs. A 3'-hydroxy group is left at the tRNA terminus and a 5'-phosphoryl group is left at the trailer molecule.. Zinc phosphodiesterase, which displays some tRNA 3'-processing endonuclease activity. Probably involved in tRNA maturation, by removing a 3'-trailer from precursor tRNA. This Staphylococcus aureus (strain MSSA476) protein is Ribonuclease Z.